The sequence spans 234 residues: Large ribosomal subunit protein uL1 (234 aa).

This sequence belongs to the universal ribosomal protein uL1 family. In terms of assembly, part of the 50S ribosomal subunit.

Functionally, binds directly to 23S rRNA. The L1 stalk is quite mobile in the ribosome, and is involved in E site tRNA release. In terms of biological role, protein L1 is also a translational repressor protein, it controls the translation of the L11 operon by binding to its mRNA. This Prochlorococcus marinus (strain MIT 9211) protein is Large ribosomal subunit protein uL1.